A 325-amino-acid chain; its full sequence is Protein FAM50B (325 aa).

The residue at position 2 (A2) is an N-acetylalanine. Disordered stretches follow at residues 92–111 (QHLE…EQRR) and 137–160 (RRAG…DREE).

It belongs to the FAM50 family. Widely expressed. Mostly abundant in testis and adult and fetal brain.

In Homo sapiens (Human), this protein is Protein FAM50B (FAM50B).